The sequence spans 492 residues: MQEAPAALPTEPGPSPVPAFLGKLWALVGDPGTDHLIRWSPSGTSFLVSDQSRFAKEVLPQYFKHSNMASFVRQLNMYGFRKVVSIEQGGLLRPERDHVEFQHPSFVRGREQLLERVRRKVPALRSDDGRWRPEDLGRLLGEVQALRGVQEITEARLRELRQQNEILWREVVTLRQSHGQQHRVIGKLIQCLFGPLQTGSSGAGAKRKLSLMLDEGSSCPTPAKFNTCPLPGALLQDPYFIQSPLPETTLGLSSSHRTRGPIISDIHEDSPSPDGTRLSPSSGGRREKGLALLKEEPASPGGEGEAGLALAPNECDFCVTAPPPLSVAVVQAILEGKGNFSPEGPRNAQQPEPRGPREVPDRGTLGLDRGARSPENLLPPMLLRAPPESVEPAGPLDVLGPSHQGREWTLMDLDMELSLMQPLGPERSETELAVKGLNSPGPGKDSTLGAPLLLDVQAALGGPALSLPGALTIYSTPESRANYLGPGANPSP.

Residues 17–121 (VPAFLGKLWA…QLLERVRRKV (105 aa)) mediate DNA binding. Positions 129-203 (GRWRPEDLGR…GPLQTGSSGA (75 aa)) are hydrophobic repeat HR-A/B. An interactions with DUSP26, MAPK1 and MAPK2 region spans residues 245-323 (LPETTLGLSS…ECDFCVTAPP (79 aa)). Residues 250–286 (LGLSSSHRTRGPIISDIHEDSPSPDGTRLSPSSGGRR) form a disordered region. Lysine 294 is covalently cross-linked (Glycyl lysine isopeptide (Lys-Gly) (interchain with G-Cter in SUMO)). Residue serine 299 is modified to Phosphoserine. The segment at 337-378 (KGNFSPEGPRNAQQPEPRGPREVPDRGTLGLDRGARSPENLL) is disordered. A hydrophobic repeat HR-C region spans residues 365–390 (LGLDRGARSPENLLPPMLLRAPPESV).

Belongs to the HSF family. In terms of assembly, homotrimer. Exhibits constitutive DNA binding and forms trimers even in the absence of stress. Interacts with ALKBH4, DUSP26, MAPK1, MAPK2, MAPK8 and MAP kinase p38. Phosphorylated mainly on serine residues. Phosphorylation on Ser-299 promotes sumoylation on Lys-294. In terms of processing, constitutively sumoylated. Sumoylation represses the transcriptional activity and is promoted by phosphorylation on Ser-299.

It is found in the nucleus. In terms of biological role, heat-shock transcription factor that specifically binds heat shock promoter elements (HSE). Required for denucleation and organelle rupture and degradation that occur during eye lens terminal differentiation, when fiber cells that compose the lens degrade all membrane-bound organelles in order to provide lens with transparency to allow the passage of light. In this process, may regulate denucleation of lens fiber cells in part by activating DNASE2B transcription. May be involved in DNA repair through the transcriptional regulation of RAD51. May up-regulate p53/TP53 protein in eye lens fiber cells, possibly through protein stabilization. In the eye lens, controls the expression of alpha-crystallin B chain/CRYAB and consequently may be involved in the regulation of lysosomal acidification. This is Heat shock factor protein 4 (HSF4) from Canis lupus familiaris (Dog).